Here is a 101-residue protein sequence, read N- to C-terminus: ATP-dependent Clp protease adapter protein ClpS (101 aa).

This sequence belongs to the ClpS family. As to quaternary structure, binds to the N-terminal domain of the chaperone ClpA.

Its function is as follows. Involved in the modulation of the specificity of the ClpAP-mediated ATP-dependent protein degradation. In Corynebacterium jeikeium (strain K411), this protein is ATP-dependent Clp protease adapter protein ClpS.